We begin with the raw amino-acid sequence, 332 residues long: UDP-3-O-acylglucosamine N-acyltransferase (332 aa).

The active-site Proton acceptor is H231.

The protein belongs to the transferase hexapeptide repeat family. LpxD subfamily. As to quaternary structure, homotrimer.

The catalysed reaction is a UDP-3-O-[(3R)-3-hydroxyacyl]-alpha-D-glucosamine + a (3R)-hydroxyacyl-[ACP] = a UDP-2-N,3-O-bis[(3R)-3-hydroxyacyl]-alpha-D-glucosamine + holo-[ACP] + H(+). The protein operates within bacterial outer membrane biogenesis; LPS lipid A biosynthesis. Catalyzes the N-acylation of UDP-3-O-acylglucosamine using 3-hydroxyacyl-ACP as the acyl donor. Is involved in the biosynthesis of lipid A, a phosphorylated glycolipid that anchors the lipopolysaccharide to the outer membrane of the cell. The chain is UDP-3-O-acylglucosamine N-acyltransferase from Ruthia magnifica subsp. Calyptogena magnifica.